Reading from the N-terminus, the 508-residue chain is Photosystem II CP47 reaction center protein (508 aa).

The next 6 helical transmembrane spans lie at 21–36 (SVHI…WAGS), 101–115 (IVFS…IWHW), 140–156 (GIHL…FGAF), 203–218 (IAAG…FHLS), 237–252 (VLSS…AFVV), and 457–472 (SFAL…HGSR).

This sequence belongs to the PsbB/PsbC family. PsbB subfamily. As to quaternary structure, PSII is composed of 1 copy each of membrane proteins PsbA, PsbB, PsbC, PsbD, PsbE, PsbF, PsbH, PsbI, PsbJ, PsbK, PsbL, PsbM, PsbT, PsbX, PsbY, PsbZ, Psb30/Ycf12, at least 3 peripheral proteins of the oxygen-evolving complex and a large number of cofactors. It forms dimeric complexes. It depends on Binds multiple chlorophylls. PSII binds additional chlorophylls, carotenoids and specific lipids. as a cofactor.

The protein resides in the plastid. It localises to the chloroplast thylakoid membrane. One of the components of the core complex of photosystem II (PSII). It binds chlorophyll and helps catalyze the primary light-induced photochemical processes of PSII. PSII is a light-driven water:plastoquinone oxidoreductase, using light energy to abstract electrons from H(2)O, generating O(2) and a proton gradient subsequently used for ATP formation. In Lobularia maritima (Sweet alyssum), this protein is Photosystem II CP47 reaction center protein.